The chain runs to 357 residues: Phosphoserine aminotransferase (357 aa).

Residue arginine 41 coordinates L-glutamate. Pyridoxal 5'-phosphate-binding positions include 75–76 (GT), tryptophan 100, threonine 150, aspartate 170, and glutamine 193. An N6-(pyridoxal phosphate)lysine modification is found at lysine 194. 234–235 (NT) serves as a coordination point for pyridoxal 5'-phosphate.

It belongs to the class-V pyridoxal-phosphate-dependent aminotransferase family. SerC subfamily. As to quaternary structure, homodimer. The cofactor is pyridoxal 5'-phosphate.

The protein localises to the cytoplasm. It carries out the reaction O-phospho-L-serine + 2-oxoglutarate = 3-phosphooxypyruvate + L-glutamate. The catalysed reaction is 4-(phosphooxy)-L-threonine + 2-oxoglutarate = (R)-3-hydroxy-2-oxo-4-phosphooxybutanoate + L-glutamate. It functions in the pathway amino-acid biosynthesis; L-serine biosynthesis; L-serine from 3-phospho-D-glycerate: step 2/3. In terms of biological role, catalyzes the reversible conversion of 3-phosphohydroxypyruvate to phosphoserine and of 3-hydroxy-2-oxo-4-phosphonooxybutanoate to phosphohydroxythreonine. The sequence is that of Phosphoserine aminotransferase from Lactiplantibacillus plantarum (strain ATCC BAA-793 / NCIMB 8826 / WCFS1) (Lactobacillus plantarum).